We begin with the raw amino-acid sequence, 723 residues long: Methionine--tRNA ligase (723 aa).

The 'HIGH' region motif lies at 11 to 21; it reads PYANGPIHAGH. Zn(2+) is bound by residues cysteine 143, cysteine 146, cysteine 156, and cysteine 159. Residues 344–348 carry the 'KMSKS' region motif; that stretch reads KFSTS. Threonine 347 provides a ligand contact to ATP. The 101-residue stretch at 623-723 folds into the tRNA-binding domain; it reads DFAKLDLRVG…KEVKLGAKVR (101 aa).

Belongs to the class-I aminoacyl-tRNA synthetase family. MetG type 1 subfamily. In terms of assembly, homodimer. Requires Zn(2+) as cofactor.

The protein resides in the cytoplasm. It catalyses the reaction tRNA(Met) + L-methionine + ATP = L-methionyl-tRNA(Met) + AMP + diphosphate. Is required not only for elongation of protein synthesis but also for the initiation of all mRNA translation through initiator tRNA(fMet) aminoacylation. The protein is Methionine--tRNA ligase of Pyrococcus horikoshii (strain ATCC 700860 / DSM 12428 / JCM 9974 / NBRC 100139 / OT-3).